Reading from the N-terminus, the 181-residue chain is Transcription antitermination protein NusB (181 aa).

Residues 1–36 (MTEDNNKAAGAKPRPARQVRTGLTSTGARKASAKSN) form a disordered region.

This sequence belongs to the NusB family.

Its function is as follows. Involved in transcription antitermination. Required for transcription of ribosomal RNA (rRNA) genes. Binds specifically to the boxA antiterminator sequence of the ribosomal RNA (rrn) operons. This chain is Transcription antitermination protein NusB, found in Variovorax paradoxus (strain S110).